The sequence spans 304 residues: UDP-3-O-acyl-N-acetylglucosamine deacetylase (304 aa).

The Zn(2+) site is built by His-78, His-235, and Asp-239. His-262 functions as the Proton donor in the catalytic mechanism.

Belongs to the LpxC family. The cofactor is Zn(2+).

The catalysed reaction is a UDP-3-O-[(3R)-3-hydroxyacyl]-N-acetyl-alpha-D-glucosamine + H2O = a UDP-3-O-[(3R)-3-hydroxyacyl]-alpha-D-glucosamine + acetate. It participates in glycolipid biosynthesis; lipid IV(A) biosynthesis; lipid IV(A) from (3R)-3-hydroxytetradecanoyl-[acyl-carrier-protein] and UDP-N-acetyl-alpha-D-glucosamine: step 2/6. Its function is as follows. Catalyzes the hydrolysis of UDP-3-O-myristoyl-N-acetylglucosamine to form UDP-3-O-myristoylglucosamine and acetate, the committed step in lipid A biosynthesis. This chain is UDP-3-O-acyl-N-acetylglucosamine deacetylase, found in Anaeromyxobacter sp. (strain Fw109-5).